The primary structure comprises 268 residues: Photosystem II 22 kDa protein 1, chloroplastic (268 aa).

The N-terminal 60 residues, Met-1 to Lys-60, are a transit peptide targeting the chloroplast. 2 consecutive repeat copies span residues Phe-54–Asp-161 and Val-164–Glu-268. 4 helical membrane-spanning segments follow: residues Val-99–Leu-119, Ala-133–Gly-153, Leu-199–Thr-219, and Pro-234–Ile-254.

This sequence belongs to the ELIP/psbS family. As to expression, expressed at low levels in leaves (at protein level).

Its subcellular location is the plastid. The protein resides in the chloroplast thylakoid membrane. Involved in high light-mediated energy-dependent nonphotochemical quenching (NPQ, qE) and thermal dissipation (TD) thus regulating energy conversion in photosystem II and protecting from photoinhibition. Also seems to regulate quantum yield of electron transport in fluctuating light conditions. The protein is Photosystem II 22 kDa protein 1, chloroplastic of Oryza sativa subsp. indica (Rice).